The following is a 534-amino-acid chain: MLSPVSRDASDALQGRKCLRPRSRRLPLPAAVRAHGPMAELTDSARGCVVFEDVFVYFSREEWELLDDAQRLLYHDVMLENFALLASLGIAFSRSRAVMKLERGEEPWVYDQVDMTSATEREAQRGLRPGCWHGVEDEEVSSEQSIFVAGVSEVRTLMAELESHPCDICGPILKDTLHLAKYHGGKARQKPYLCGACGKQFWFSTDFDQHQNQPNGGKLFPRKEGRDSVKSCRVHVPEKTLTCGKGRRDFSATSGLLQHQASLSSMKPHKSTKLVSGFLMGQRYHRCGECGKAFTRKDTLARHQRIHTGERPYECNECGKFFSQSYDLFKHQTVHTGERPYECSECGKFFRQISGLIEHRRVHTGERLYQCGKCGKFFSSKSNLIRHQEVHTGARPYVCSECGKEFSRKHTLVLHQRTHTGERPYECSECGKAFSQSSHLNVHWRIHSSDYECSRCGKAFSCISKLIQHQKVHSGEKPYECSKCGKAFTQRPNLIRHWKVHTGERPYVCSECGREFIRKQTLVLHQRVHAGEKL.

Residues 49–120 enclose the KRAB domain; it reads VVFEDVFVYF…DQVDMTSATE (72 aa). The segment at 192–214 adopts a C2H2-type 1; degenerate zinc-finger fold; sequence YLCGACGKQFWFSTDFDQHQNQP. C2H2-type zinc fingers lie at residues 285–307, 313–335, 341–363, 369–391, 397–419, 425–447, 451–473, 479–501, and 507–529; these read HRCG…QRIH, YECN…QTVH, YECS…RRVH, YQCG…QEVH, YVCS…QRTH, YECS…WRIH, YECS…QKVH, YECS…WKVH, and YVCS…QRVH.

It belongs to the krueppel C2H2-type zinc-finger protein family.

It localises to the nucleus. Functionally, may be involved in transcriptional regulation. In Homo sapiens (Human), this protein is Zinc finger protein 671 (ZNF671).